The chain runs to 212 residues: Phosphoribosyl-dephospho-CoA transferase (212 aa).

Catalysis depends on residues Asp139 and Asp141.

It belongs to the MdcG family.

The catalysed reaction is apo-[malonate decarboxylase ACP] + 2'-(5''-triphospho-alpha-D-ribosyl)-3'-dephospho-CoA = holo-[malonate decarboxylase ACP] + diphosphate. In terms of biological role, transfers 2'-(5-triphosphoribosyl)-3'-dephosphocoenzyme-A to the apo-[acyl-carrier-protein] of the malonate decarboxylase to yield holo-[acyl-carrier-protein]. The protein is Phosphoribosyl-dephospho-CoA transferase of Azotobacter vinelandii (strain DJ / ATCC BAA-1303).